The chain runs to 139 residues: Large ribosomal subunit protein uL13c (139 aa).

Belongs to the universal ribosomal protein uL13 family. As to quaternary structure, part of the 50S ribosomal subunit.

It is found in the plastid. The protein localises to the chloroplast. This is Large ribosomal subunit protein uL13c from Trieres chinensis (Marine centric diatom).